A 426-amino-acid chain; its full sequence is Serine--tRNA ligase (426 aa).

227–229 (TSE) contributes to the L-serine binding site. ATP contacts are provided by residues 258–260 (RKE) and Val-274. Glu-281 serves as a coordination point for L-serine. 345–348 (ELTS) serves as a coordination point for ATP. Thr-380 is a binding site for L-serine.

The protein belongs to the class-II aminoacyl-tRNA synthetase family. Type-1 seryl-tRNA synthetase subfamily. Homodimer. The tRNA molecule binds across the dimer.

It is found in the cytoplasm. The catalysed reaction is tRNA(Ser) + L-serine + ATP = L-seryl-tRNA(Ser) + AMP + diphosphate + H(+). The enzyme catalyses tRNA(Sec) + L-serine + ATP = L-seryl-tRNA(Sec) + AMP + diphosphate + H(+). It participates in aminoacyl-tRNA biosynthesis; selenocysteinyl-tRNA(Sec) biosynthesis; L-seryl-tRNA(Sec) from L-serine and tRNA(Sec): step 1/1. Its function is as follows. Catalyzes the attachment of serine to tRNA(Ser). Is also able to aminoacylate tRNA(Sec) with serine, to form the misacylated tRNA L-seryl-tRNA(Sec), which will be further converted into selenocysteinyl-tRNA(Sec). The sequence is that of Serine--tRNA ligase from Clavibacter sepedonicus (Clavibacter michiganensis subsp. sepedonicus).